Consider the following 32-residue polypeptide: VGCAECPMHCKGKMAKPTCENEVCKCNIGKKD.

Intrachain disulfides connect C3–C19, C6–C24, and C10–C26.

In terms of tissue distribution, expressed by the venom gland.

It localises to the secreted. In terms of biological role, blocker of human voltage-gated potassium channel Kv1.1/KCNA1. The chain is Potassium channel toxin alpha-KTx 9.4 from Hottentotta tamulus (Eastern Indian scorpion).